The chain runs to 216 residues: LexA repressor 1 (216 aa).

Residues 38 to 58 (TRQIGAAVGLRSMSSVARHLR) constitute a DNA-binding region (H-T-H motif). Residues S140 and K177 each act as for autocatalytic cleavage activity in the active site.

Belongs to the peptidase S24 family. As to quaternary structure, homodimer.

It carries out the reaction Hydrolysis of Ala-|-Gly bond in repressor LexA.. In terms of biological role, represses a number of genes involved in the response to DNA damage (SOS response), including recA and lexA. In the presence of single-stranded DNA, RecA interacts with LexA causing an autocatalytic cleavage which disrupts the DNA-binding part of LexA, leading to derepression of the SOS regulon and eventually DNA repair. In Nocardia farcinica (strain IFM 10152), this protein is LexA repressor 1.